Consider the following 436-residue polypeptide: MSDRQQVTNAKGERIAIVAGLRTPFAKQATAFHGVSALDMGKMVVNELLVRSELDPKLIEQLVYGQVVQMPAAPNIAREIVLGTGMNVSTDAYSVTRACATSFQSTVNVAESIMTGNIDIGIAGGADSSSVLPIGVSKKLAHALVDLNKARSFGQKLQIFRRLGLKDLLPVPPAVAEYSTGLSMGQTAEQMAKTYNISRADQDALAHRSHTLASETWASGHLRDEVMVAHIPPYKQFIDRDNNIRENSVLESYAKLRPAFDKQHGTVTAANSTPLTDGASAIILMSEGRAKALGYQPIGYIKSYAFSAINVWQDMLMGPSYATPLALKRAGMELEDLTLIEMHEAFAAQTLANMQMFASKKFAEEKLGRNRAIGEIDMSKFNVLGGSLAYGHPFAATGTRLITQVCRELKRRGGGTGLTTACAAGGLGVAMIVEVE.

C99 (acyl-thioester intermediate) is an active-site residue. Catalysis depends on proton acceptor residues H392 and C422.

The protein belongs to the thiolase-like superfamily. Thiolase family. In terms of assembly, heterotetramer of two alpha chains (FadJ) and two beta chains (FadI).

Its subcellular location is the cytoplasm. It carries out the reaction an acyl-CoA + acetyl-CoA = a 3-oxoacyl-CoA + CoA. Its pathway is lipid metabolism; fatty acid beta-oxidation. In terms of biological role, catalyzes the final step of fatty acid oxidation in which acetyl-CoA is released and the CoA ester of a fatty acid two carbons shorter is formed. This is 3-ketoacyl-CoA thiolase from Shewanella putrefaciens (strain CN-32 / ATCC BAA-453).